The primary structure comprises 120 residues: Large ribosomal subunit protein bL19 (120 aa).

The protein belongs to the bacterial ribosomal protein bL19 family.

This protein is located at the 30S-50S ribosomal subunit interface and may play a role in the structure and function of the aminoacyl-tRNA binding site. In Dichelobacter nodosus (strain VCS1703A), this protein is Large ribosomal subunit protein bL19.